A 300-amino-acid polypeptide reads, in one-letter code: Elongator complex protein 5 (300 aa).

Ser-252 bears the Phosphoserine mark. The segment at 264-300 (QQALLRPRPGQATSHIFYEPDAYDDLDQEDPDDDLDI) is disordered. Residues 284–300 (DAYDDLDQEDPDDDLDI) are compositionally biased toward acidic residues.

Belongs to the ELP5 family. In terms of assembly, component of the elongator complex which consists of ELP1, ELP2, ELP3, ELP4, ELP5 and ELP6; in the complex, is required for optimal binding of ELP3 to ELP4. In terms of processing, tyrosine-phosphorylated. As to expression, ubiquitously expressed with high levels in heart, brain, liver, skeletal muscle and testis.

It is found in the nucleus. The protein localises to the cytoplasm. The protein operates within tRNA modification; 5-methoxycarbonylmethyl-2-thiouridine-tRNA biosynthesis. Component of the elongator complex which is required for multiple tRNA modifications, including mcm5U (5-methoxycarbonylmethyl uridine), mcm5s2U (5-methoxycarbonylmethyl-2-thiouridine), and ncm5U (5-carbamoylmethyl uridine). The elongator complex catalyzes formation of carboxymethyluridine in the wobble base at position 34 in tRNAs. Involved in cell migration. This is Elongator complex protein 5 from Homo sapiens (Human).